A 265-amino-acid chain; its full sequence is tRNA pseudouridine synthase A (265 aa).

The active-site Nucleophile is the Asp-52. Position 112 (Tyr-112) interacts with substrate.

It belongs to the tRNA pseudouridine synthase TruA family. As to quaternary structure, homodimer.

The enzyme catalyses uridine(38/39/40) in tRNA = pseudouridine(38/39/40) in tRNA. Functionally, formation of pseudouridine at positions 38, 39 and 40 in the anticodon stem and loop of transfer RNAs. The sequence is that of tRNA pseudouridine synthase A from Akkermansia muciniphila (strain ATCC BAA-835 / DSM 22959 / JCM 33894 / BCRC 81048 / CCUG 64013 / CIP 107961 / Muc).